The following is a 198-amino-acid chain: Inner membrane-spanning protein YciB (198 aa).

The next 5 helical transmembrane spans lie at 36 to 56, 67 to 87, 90 to 110, 135 to 155, and 162 to 182; these read IYSATAMLIISSLVVYGALFI, LTLIACLVFGSLTLAFHSETF, WKAPVVNWLFALAFIGSHFIG, IAWIAFFLFCGAANLFVAFTF, and FKVFGSLGMTVLFLVGQGIYL.

This sequence belongs to the YciB family.

The protein localises to the cell inner membrane. Plays a role in cell envelope biogenesis, maintenance of cell envelope integrity and membrane homeostasis. The protein is Inner membrane-spanning protein YciB of Pseudomonas fluorescens (strain Pf0-1).